A 217-amino-acid chain; its full sequence is Probable GTP-binding protein EngB (217 aa).

Residues 29–213 enclose the EngB-type G domain; the sequence is GPPEVAFAGR…RQAIAETVGI (185 aa). GTP-binding positions include 37-44, 64-68, 91-94, 158-161, and 192-194; these read GRSNVGKS, GRTQE, DMPG, TKTD, and TSS. 2 residues coordinate Mg(2+): S44 and T66.

It belongs to the TRAFAC class TrmE-Era-EngA-EngB-Septin-like GTPase superfamily. EngB GTPase family. Requires Mg(2+) as cofactor.

In terms of biological role, necessary for normal cell division and for the maintenance of normal septation. The polypeptide is Probable GTP-binding protein EngB (Rhizobium etli (strain ATCC 51251 / DSM 11541 / JCM 21823 / NBRC 15573 / CFN 42)).